Reading from the N-terminus, the 437-residue chain is Peptidyl-prolyl cis-trans isomerase CYP38, chloroplastic (437 aa).

A chloroplast-targeting transit peptide spans 1 to 36 (MAAAFASLPTFSVVNSSRFPRRRIGFSCSKKPLEVR). A thylakoid-targeting transit peptide spans 37–92 (CSSGNTRYTKQRGAFTSLKECAISLALSVGLMVSVPSIALPPNAHAVANPVIPDVS). The PPIase cyclophilin-type domain maps to 245–437 (VKIKDNPNIE…LANPSYKIAG (193 aa)).

As to expression, ubiquitous. Lower levels of expression in roots.

Its subcellular location is the plastid. It localises to the chloroplast thylakoid lumen. It catalyses the reaction [protein]-peptidylproline (omega=180) = [protein]-peptidylproline (omega=0). Its function is as follows. Required for the assembly and stabilization of PSII, but has no PPIases activity. This Arabidopsis thaliana (Mouse-ear cress) protein is Peptidyl-prolyl cis-trans isomerase CYP38, chloroplastic (CYP38).